The chain runs to 208 residues: ATP-dependent Clp protease proteolytic subunit (208 aa).

Catalysis depends on serine 111, which acts as the Nucleophile. The active site involves histidine 136.

The protein belongs to the peptidase S14 family. In terms of assembly, fourteen ClpP subunits assemble into 2 heptameric rings which stack back to back to give a disk-like structure with a central cavity, resembling the structure of eukaryotic proteasomes.

It localises to the cytoplasm. The catalysed reaction is Hydrolysis of proteins to small peptides in the presence of ATP and magnesium. alpha-casein is the usual test substrate. In the absence of ATP, only oligopeptides shorter than five residues are hydrolyzed (such as succinyl-Leu-Tyr-|-NHMec, and Leu-Tyr-Leu-|-Tyr-Trp, in which cleavage of the -Tyr-|-Leu- and -Tyr-|-Trp bonds also occurs).. Cleaves peptides in various proteins in a process that requires ATP hydrolysis. Has a chymotrypsin-like activity. Plays a major role in the degradation of misfolded proteins. The sequence is that of ATP-dependent Clp protease proteolytic subunit from Vibrio campbellii (strain ATCC BAA-1116).